Consider the following 203-residue polypeptide: uncharacterized protein (203 aa).

This is an uncharacterized protein from Caldicellulosiruptor sp. (strain Rt8B.4).